Here is a 119-residue protein sequence, read N- to C-terminus: Holo-[acyl-carrier-protein] synthase (119 aa).

Residues aspartate 8 and glutamate 60 each contribute to the Mg(2+) site.

Belongs to the P-Pant transferase superfamily. AcpS family. It depends on Mg(2+) as a cofactor.

It is found in the cytoplasm. The catalysed reaction is apo-[ACP] + CoA = holo-[ACP] + adenosine 3',5'-bisphosphate + H(+). Transfers the 4'-phosphopantetheine moiety from coenzyme A to a Ser of acyl-carrier-protein. In Staphylococcus haemolyticus (strain JCSC1435), this protein is Holo-[acyl-carrier-protein] synthase.